A 108-amino-acid polypeptide reads, in one-letter code: Peptidyl-prolyl cis-trans isomerase FKBP1A (108 aa).

The PPIase FKBP-type domain maps to 20–108 (GQTCVVHYTG…IFDVELLKLE (89 aa)). K53 is modified (N6-acetyllysine; alternate). Position 53 is an N6-succinyllysine; alternate (K53).

Belongs to the FKBP-type PPIase family. FKBP1 subfamily. Interacts with TGFBR1; prevents TGFBR1 phosphorylation by TGFBR2 and stabilizes it in the inactive conformation. Interacts with ACVR1B and SMAD7. Identified in a complex composed of RYR1, PDE4D, PKA, FKBP1A and protein phosphatase 1 (PP1). Interacts directly with RYR2 and RYR3. Interacts with GLMN; rapamycin and FK506 abolish the interaction with GLMN in a dose dependent manner. Interacts directly with RYR1.

The protein localises to the cytoplasm. The protein resides in the cytosol. Its subcellular location is the sarcoplasmic reticulum membrane. It carries out the reaction [protein]-peptidylproline (omega=180) = [protein]-peptidylproline (omega=0). Inhibited by both FK506 and rapamycin. Keeps in an inactive conformation TGFBR1, the TGF-beta type I serine/threonine kinase receptor, preventing TGF-beta receptor activation in absence of ligand. May modulate the RYR1 calcium channel activity. PPIases accelerate the folding of proteins. It catalyzes the cis-trans isomerization of proline imidic peptide bonds in oligopeptides. This is Peptidyl-prolyl cis-trans isomerase FKBP1A (FKBP1A) from Bos taurus (Bovine).